We begin with the raw amino-acid sequence, 368 residues long: tRNA-specific 2-thiouridylase MnmA (368 aa).

ATP contacts are provided by residues 11–18 (GMSGGVDS) and methionine 37. Residues 97–99 (NPD) form an interaction with target base in tRNA region. Residue cysteine 102 is the Nucleophile of the active site. Cysteine 102 and cysteine 199 form a disulfide bridge. Glycine 127 serves as a coordination point for ATP. Residues 149-151 (KDQ) are interaction with tRNA. Cysteine 199 (cysteine persulfide intermediate) is an active-site residue. The segment at 311 to 312 (RY) is interaction with tRNA.

It belongs to the MnmA/TRMU family. Interacts with TusE.

The protein localises to the cytoplasm. It carries out the reaction S-sulfanyl-L-cysteinyl-[protein] + uridine(34) in tRNA + AH2 + ATP = 2-thiouridine(34) in tRNA + L-cysteinyl-[protein] + A + AMP + diphosphate + H(+). In terms of biological role, catalyzes the 2-thiolation of uridine at the wobble position (U34) of tRNA(Lys), tRNA(Glu) and tRNA(Gln), leading to the formation of s(2)U34, the first step of tRNA-mnm(5)s(2)U34 synthesis. Sulfur is provided by IscS, via a sulfur-relay system. Binds ATP and its substrate tRNAs. This is tRNA-specific 2-thiouridylase MnmA from Escherichia coli O1:K1 / APEC.